The primary structure comprises 457 residues: Cysteine--tRNA ligase (457 aa).

Cysteine 28 is a Zn(2+) binding site. A 'HIGH' region motif is present at residues 30–40 (MTVYDYCHLGH). Cysteine 209, histidine 234, and glutamate 238 together coordinate Zn(2+). Positions 266–270 (KMSKS) match the 'KMSKS' region motif. Residue lysine 269 participates in ATP binding.

The protein belongs to the class-I aminoacyl-tRNA synthetase family. As to quaternary structure, monomer. Requires Zn(2+) as cofactor.

It is found in the cytoplasm. It catalyses the reaction tRNA(Cys) + L-cysteine + ATP = L-cysteinyl-tRNA(Cys) + AMP + diphosphate. In Laribacter hongkongensis (strain HLHK9), this protein is Cysteine--tRNA ligase.